The sequence spans 378 residues: Ubiquitin-conjugating enzyme E2 Q2 (378 aa).

The interval 126–152 (DQPLPTGQNGTTEEVTSEEEEEEEMAE) is disordered. Residues 140–152 (VTSEEEEEEEMAE) show a composition bias toward acidic residues. The 165-residue stretch at 207-371 (QASDRLMKEL…VQIHEKNGWY (165 aa)) folds into the UBC core domain. Cys307 serves as the catalytic Glycyl thioester intermediate.

This sequence belongs to the ubiquitin-conjugating enzyme family. In terms of processing, auto-ubiquitinated in vitro.

It localises to the cytoplasm. It carries out the reaction S-ubiquitinyl-[E1 ubiquitin-activating enzyme]-L-cysteine + [E2 ubiquitin-conjugating enzyme]-L-cysteine = [E1 ubiquitin-activating enzyme]-L-cysteine + S-ubiquitinyl-[E2 ubiquitin-conjugating enzyme]-L-cysteine.. Its pathway is protein modification; protein ubiquitination. Its function is as follows. Accepts ubiquitin from the E1 complex and catalyzes its covalent attachment to other proteins. In vitro catalyzes 'Lys-48'-linked polyubiquitination. The chain is Ubiquitin-conjugating enzyme E2 Q2 (Ube2q2) from Mus musculus (Mouse).